The sequence spans 281 residues: Complement C1q tumor necrosis factor-related protein 1 (281 aa).

Residues Met1–Ser25 form the signal peptide. Positions Gln35–Leu68 are disordered. Positions Thr51–Glu66 are enriched in basic and acidic residues. Residue Asn93 is glycosylated (N-linked (GlcNAc...) asparagine). In terms of domain architecture, Collagen-like spans Gly99–His140. Residues Arg107–Ala136 are disordered. The C1q domain maps to Cys141–Pro281.

Its subcellular location is the secreted. The chain is Complement C1q tumor necrosis factor-related protein 1 (C1qtnf1) from Mus musculus (Mouse).